We begin with the raw amino-acid sequence, 109 residues long: Large ribosomal subunit protein uL22 (109 aa).

The protein belongs to the universal ribosomal protein uL22 family. Part of the 50S ribosomal subunit.

This protein binds specifically to 23S rRNA; its binding is stimulated by other ribosomal proteins, e.g. L4, L17, and L20. It is important during the early stages of 50S assembly. It makes multiple contacts with different domains of the 23S rRNA in the assembled 50S subunit and ribosome. Its function is as follows. The globular domain of the protein is located near the polypeptide exit tunnel on the outside of the subunit, while an extended beta-hairpin is found that lines the wall of the exit tunnel in the center of the 70S ribosome. The protein is Large ribosomal subunit protein uL22 of Aromatoleum aromaticum (strain DSM 19018 / LMG 30748 / EbN1) (Azoarcus sp. (strain EbN1)).